A 1058-amino-acid polypeptide reads, in one-letter code: Carbamoyl phosphate synthase large chain (1058 aa).

Residues 1–401 (MAKRTDIKKI…CLLKACRSLE (401 aa)) are carboxyphosphate synthetic domain. The ATP site is built by Arg129, Arg169, Gly175, Gly176, Arg208, Ile210, Glu215, Gly241, Ile242, His243, Gln284, and Glu298. The 195-residue stretch at 133–327 (KQLMKELGEP…IAKIAAKIAV (195 aa)) folds into the ATP-grasp 1 domain. Gln284, Glu298, and Asn300 together coordinate Mg(2+). Residues Gln284, Glu298, and Asn300 each coordinate Mn(2+). The interval 402 to 546 (IGVHHNELKG…YSTYEWENES (145 aa)) is oligomerization domain. Residues 547–929 (IKSEKESVIV…ALYKAFEASY (383 aa)) are carbamoyl phosphate synthetic domain. In terms of domain architecture, ATP-grasp 2 spans 671 to 861 (EKALKELGIP…MAQVATKLIL (191 aa)). ATP contacts are provided by Arg707, Ser746, Ile748, Glu752, Gly777, Val778, His779, Ser780, Gln820, and Glu832. The Mg(2+) site is built by Gln820, Glu832, and Asn834. Mn(2+) is bound by residues Gln820, Glu832, and Asn834. The MGS-like domain maps to 930–1058 (LHMPEYGTIV…ESRTFSIEAI (129 aa)). The segment at 930–1058 (LHMPEYGTIV…ESRTFSIEAI (129 aa)) is allosteric domain.

This sequence belongs to the CarB family. As to quaternary structure, composed of two chains; the small (or glutamine) chain promotes the hydrolysis of glutamine to ammonia, which is used by the large (or ammonia) chain to synthesize carbamoyl phosphate. Tetramer of heterodimers (alpha,beta)4. It depends on Mg(2+) as a cofactor. Requires Mn(2+) as cofactor.

It carries out the reaction hydrogencarbonate + L-glutamine + 2 ATP + H2O = carbamoyl phosphate + L-glutamate + 2 ADP + phosphate + 2 H(+). The enzyme catalyses hydrogencarbonate + NH4(+) + 2 ATP = carbamoyl phosphate + 2 ADP + phosphate + 2 H(+). It participates in amino-acid biosynthesis; L-arginine biosynthesis; carbamoyl phosphate from bicarbonate: step 1/1. It functions in the pathway pyrimidine metabolism; UMP biosynthesis via de novo pathway; (S)-dihydroorotate from bicarbonate: step 1/3. Large subunit of the glutamine-dependent carbamoyl phosphate synthetase (CPSase). CPSase catalyzes the formation of carbamoyl phosphate from the ammonia moiety of glutamine, carbonate, and phosphate donated by ATP, constituting the first step of 2 biosynthetic pathways, one leading to arginine and/or urea and the other to pyrimidine nucleotides. The large subunit (synthetase) binds the substrates ammonia (free or transferred from glutamine from the small subunit), hydrogencarbonate and ATP and carries out an ATP-coupled ligase reaction, activating hydrogencarbonate by forming carboxy phosphate which reacts with ammonia to form carbamoyl phosphate. The sequence is that of Carbamoyl phosphate synthase large chain from Streptococcus equi subsp. equi (strain 4047).